We begin with the raw amino-acid sequence, 265 residues long: Tryptophan synthase alpha chain (265 aa).

Active-site proton acceptor residues include Glu-48 and Asp-59.

It belongs to the TrpA family. Tetramer of two alpha and two beta chains.

The catalysed reaction is (1S,2R)-1-C-(indol-3-yl)glycerol 3-phosphate + L-serine = D-glyceraldehyde 3-phosphate + L-tryptophan + H2O. Its pathway is amino-acid biosynthesis; L-tryptophan biosynthesis; L-tryptophan from chorismate: step 5/5. Its function is as follows. The alpha subunit is responsible for the aldol cleavage of indoleglycerol phosphate to indole and glyceraldehyde 3-phosphate. The chain is Tryptophan synthase alpha chain from Vesicomyosocius okutanii subsp. Calyptogena okutanii (strain HA).